Here is a 712-residue protein sequence, read N- to C-terminus: TIR domain-containing adapter molecule 1 (712 aa).

Positions 1–153 (MACTGPSLPS…CGWDIAGDPG (153 aa)) are TRIF-NTD. The TRAF6-binding signature appears at 84–91 (EDPEEPPD). The short motif at 207–210 (LEIS) is the pLxIS motif element. Ser-210 bears the Phosphoserine; by TBK1 mark. 2 disordered regions span residues 216–316 (PFLS…SLPL) and 336–384 (LSVE…LFPS). Residue Lys-229 forms a Glycyl lysine isopeptide (Lys-Gly) (interchain with G-Cter in ubiquitin) linkage. The short motif at 248–255 (QEPEEMSW) is the TRAF6-binding element. Positions 265–275 (PELPSSPPPGL) are enriched in pro residues. The TRAF6-binding signature appears at 299-309 (NYPVECTEGSA). Positions 347 to 369 (KPCPPTPTTPETSPPPPPPPPSS) are enriched in pro residues. The TIR domain maps to 393–553 (KFYNFVILHA…QDTRALREQS (161 aa)). A sufficient to induce apoptosis region spans residues 512–712 (RLDEHSQIFA…APEDKTQEAE (201 aa)). Composition is skewed to pro residues over residues 620–633 (PFPT…PPPL) and 640–649 (TPPPPSPQPA). The disordered stretch occupies residues 620 to 677 (PFPTWPGCPQPPPLHAWQAGTPPPPSPQPAAFPQSLPFPQSPAFPTASPAPPQSPGLQ). Low complexity predominate over residues 650 to 666 (AFPQSLPFPQSPAFPTA).

In terms of assembly, homodimer. Found in a multi-helicase-TICAM1 complex at least composed of DHX36, DDX1, DDX21 and TICAM1; this complex exists in resting cells with or without poly(I:C) RNA ligand stimulation. Interacts (via TIR domain) with DDX21 (via C-terminus). Interacts (via TIR domain) with DHX36 (via C-terminus). Interacts with AZI2 and IRF7. Interacts with TICAM2 in TLR4 recruitment. Interaction with PIAS4 inhibits the TICAM1-induced NF-kappa-B, IRF and IFNB1 activation. Interacts with IKBKB and IKBKE. Interaction with SARM1 blocks TICAM1-dependent transcription factor activation. Interacts with TRAF3. Interacts (when phosphorylated) with IRF3; following activation and phosphorylation on the pLxIS motif by TBK1, recruits IRF3. Interacts with TBK1, TRAF6 and RIPK1 and these interactions are enhanced in the presence of WDFY1. Interacts with TRAFD1. Interacts with UBQLN1 (via UBA domain). Interacts with TLR4. Interacts with WDFY1 in response to poly(I:C). Interacts (via the TIR domain) with TLR3 in response to poly(I:C) and this interaction is enhanced in the presence of WDFY1. Interacts with TRIM56. Component of a multi-helicase-TICAM1 complex that acts as a cytoplasmic sensor of viral double-stranded RNA (dsRNA) and plays a role in the activation of a cascade of antiviral responses including the induction of pro-inflammatory cytokines. Interacts (via the TIR domain) with TLR5. Interacts with TRIM8. Interacts with TAX1BP1 and TRIM32; these interactions target TICAM1 to TAX1BP1-mediated selective autophagic degradation. Interacts with DDX50. (Microbial infection) Interacts with hepatitis C virus (HCV) NS3/4A protease; this interaction leads to TICAM1 cleavage, thereby disrupting TLR3 signaling and preventing the establishment of an antiviral state. As to quaternary structure, (Microbial infection) Interacts with Seneca Valley virus protease 3C; this interaction allows the cleavage of TICAM1/TRIF and subsequent suppression of host innate immunity. In terms of assembly, (Microbial infection) Interacts (via C-terminus) with coxsackievirus B3 (CVB3) protease 3C. In terms of processing, phosphorylated by TBK1. Following activation, phosphorylated by TBK1 at Ser-210 in the pLxIS motif. The phosphorylated pLxIS motif constitutes an IRF3-binding motif, leading to recruitment of the transcription factor IRF3 to induce type-I interferons and other cytokines. Post-translationally, polyubiquitinated at Lys-229 by TRIM38 with 'Lys-48'-linked chains, leading to proteasomal degradation. Polyubiquitinated with 'Lys-6'- and 'Lys-33'-linked chains in a TRIM8-dependent manner; ubiquitination disrupts the interaction with TBK1 and subsequent interferon production. (Microbial infection) Cleaved and degraded by hepatitis A virus (HAV) protein 3CD allowing the virus to disrupt host TLR3 signaling. In terms of processing, (Microbial infection) Cleaved by CVB3 protease 3C allowing the virus to disrupt host TLR3 signaling. Post-translationally, (Microbial infection) Cleaved by Seneca Valley virus protease 3C allowing the virus to disrupt host TLR3 signaling. (Microbial infection) Cleaved by protease 3C of human enterovirus D68 (EV68) allowing the virus to disrupt host TLR3 signaling. In terms of processing, (Microbial infection) Cleaved by HCV protease NS3/4A, thereby disrupting TLR3 signaling and preventing the establishment of an antiviral state. As to expression, ubiquitously expressed but with higher levels in liver.

It localises to the cytoplasmic vesicle. Its subcellular location is the autophagosome. The protein resides in the cytoplasm. The protein localises to the cytosol. It is found in the mitochondrion. Functionally, involved in innate immunity against invading pathogens. Adapter used by TLR3, TLR4 (through TICAM2) and TLR5 to mediate NF-kappa-B and interferon-regulatory factor (IRF) activation, and to induce apoptosis. Ligand binding to these receptors results in TRIF recruitment through its TIR domain. Distinct protein-interaction motifs allow recruitment of the effector proteins TBK1, TRAF6 and RIPK1, which in turn, lead to the activation of transcription factors IRF3 and IRF7, NF-kappa-B and FADD respectively. Phosphorylation by TBK1 on the pLxIS motif leads to recruitment and subsequent activation of the transcription factor IRF3 to induce expression of type I interferon and exert a potent immunity against invading pathogens. Component of a multi-helicase-TICAM1 complex that acts as a cytoplasmic sensor of viral double-stranded RNA (dsRNA) and plays a role in the activation of a cascade of antiviral responses including the induction of pro-inflammatory cytokines. The chain is TIR domain-containing adapter molecule 1 (TICAM1) from Homo sapiens (Human).